Here is a 750-residue protein sequence, read N- to C-terminus: Pesticidal crystal protein Cry11Bb (750 aa).

The tract at residues 672–750 is disordered; that stretch reads QGYNDNYNQN…NYNQNTSSGV (79 aa).

This sequence belongs to the delta endotoxin family.

In terms of biological role, promotes colloidosmotic lysis by binding to the midgut epithelial cells of mosquito larvae such as Aedes aegypti, Anopheles albimanus and Culex quinquefasciatus. The sequence is that of Pesticidal crystal protein Cry11Bb (cry11Bb) from Bacillus thuringiensis subsp. medellin.